We begin with the raw amino-acid sequence, 185 residues long: MAETAYVPRLRTEYDRHIRTQLTEKFGYANVMQVPKLDKVVLNMGVGEAVNDRKKAEQAAADLSLIAGQKAVITYSRVAISTFKLRENQPIGCKVTLRQARMYEFIDRLITVALPRVRDFRGLNPKSFDGRGNYSLGIKEHIIFPEIDFDKTGESWGMDITVCTTARTDDEARALLTAFNFPFRQ.

This sequence belongs to the universal ribosomal protein uL5 family. In terms of assembly, part of the 50S ribosomal subunit; part of the 5S rRNA subcomplex. Contacts the 5S rRNA and the P site tRNA. Forms a bridge to the 30S subunit in the 70S ribosome. In terms of processing, both N-terminus methionine truncation and retention have been observed for this protein. May be methylated twice, on undetermined residues.

Functionally, this is one of the proteins that bind and probably mediate the attachment of the 5S RNA into the large ribosomal subunit, where it forms part of the central protuberance. In the 70S ribosome it contacts protein S13 of the 30S subunit (bridge B1b), connecting the 2 subunits; this bridge is implicated in subunit movement. Contacts the P site tRNA; the 5S rRNA and some of its associated proteins might help stabilize positioning of ribosome-bound tRNAs. This Rhodopseudomonas palustris (strain ATCC BAA-98 / CGA009) protein is Large ribosomal subunit protein uL5.